The primary structure comprises 686 residues: Envelope glycoprotein H (686 aa).

Positions 1–24 (MPASSVRLPLRLLTLAGLLALAGA) are cleaved as a signal peptide. The Virion surface portion of the chain corresponds to 25–646 (AALARGAPQG…TSTRLAPVSP (622 aa)). Residues N77, N162, N542, N604, and N627 are each glycosylated (N-linked (GlcNAc...) asparagine; by host). Positions 157-217 (PAAVFNVTLG…PPAGRFHVYT (61 aa)) are interaction with gL. A helical transmembrane segment spans residues 647-667 (AYVVASVVGAAITVGILYALF). At 668 to 686 (KMLCSFSSEGYSRLINARS) the chain is on the intravirion side.

The protein belongs to the herpesviridae glycoprotein H family. In terms of assembly, interacts with glycoprotein L (gL); this interaction is necessary for the correct processing and cell surface expression of gH. The heterodimer gH/gL seems to interact with gB trimers during fusion. Post-translationally, N-glycosylated, O-glycosylated, and sialylated.

The protein resides in the virion membrane. The protein localises to the host cell membrane. It is found in the host endosome membrane. Functionally, the heterodimer glycoprotein H-glycoprotein L is required for the fusion of viral and plasma membranes leading to virus entry into the host cell. Following initial binding to host receptor, membrane fusion is mediated by the fusion machinery composed of gB and the heterodimer gH/gL. May also be involved in the fusion between the virion envelope and the outer nuclear membrane during virion morphogenesis. This is Envelope glycoprotein H from Suid herpesvirus 1 (strain Rice) (SuHV-1).